A 108-amino-acid polypeptide reads, in one-letter code: Tetrahydromethanopterin S-methyltransferase subunit B (108 aa).

Residues 80 to 100 (AFYGIVVGLAFSGLLALIIFI) form a helical membrane-spanning segment.

The protein belongs to the MtrB family. In terms of assembly, the complex is composed of 8 subunits; MtrA, MtrB, MtrC, MtrD, MtrE, MtrF, MtrG and MtrH.

The protein localises to the cell membrane. It carries out the reaction 5-methyl-5,6,7,8-tetrahydromethanopterin + coenzyme M + 2 Na(+)(in) = 5,6,7,8-tetrahydromethanopterin + methyl-coenzyme M + 2 Na(+)(out). Its pathway is one-carbon metabolism; methanogenesis from CO(2); methyl-coenzyme M from 5,10-methylene-5,6,7,8-tetrahydromethanopterin: step 2/2. Part of a complex that catalyzes the formation of methyl-coenzyme M and tetrahydromethanopterin from coenzyme M and methyl-tetrahydromethanopterin. This is an energy-conserving, sodium-ion translocating step. This is Tetrahydromethanopterin S-methyltransferase subunit B from Methanosarcina acetivorans (strain ATCC 35395 / DSM 2834 / JCM 12185 / C2A).